A 365-amino-acid polypeptide reads, in one-letter code: Caffeic acid 3-O-methyltransferase (365 aa).

Substrate is bound at residue 130–136 (MNQDKVL). Residues 162–180 (AFEYHGTDPRFNKVFNRGM) are substrate binding. G208, D231, D251, M252, and K265 together coordinate S-adenosyl-L-methionine. Residue H269 is the Proton acceptor of the active site.

It belongs to the class I-like SAM-binding methyltransferase superfamily. Cation-independent O-methyltransferase family. COMT subfamily. Homodimer.

It catalyses the reaction (E)-caffeate + S-adenosyl-L-methionine = (E)-ferulate + S-adenosyl-L-homocysteine + H(+). It functions in the pathway aromatic compound metabolism; phenylpropanoid biosynthesis. Functionally, catalyzes the conversion of caffeic acid to ferulic acid and of 5-hydroxyferulic acid to sinapic acid. The resulting products may subsequently be converted to the corresponding alcohols that are incorporated into lignins. This Prunus dulcis (Almond) protein is Caffeic acid 3-O-methyltransferase (COMT1).